The sequence spans 476 residues: Adenosylhomocysteinase (476 aa).

Substrate-binding residues include threonine 67, aspartate 142, and glutamate 202. An NAD(+)-binding site is contributed by 203–205; the sequence is TTT. Substrate-binding residues include lysine 232 and aspartate 236. Residues asparagine 237, 266-271, glutamate 289, asparagine 324, 345-347, and asparagine 390 each bind NAD(+); these read GYGDVG and IGH.

This sequence belongs to the adenosylhomocysteinase family. It depends on NAD(+) as a cofactor.

The protein resides in the cytoplasm. The enzyme catalyses S-adenosyl-L-homocysteine + H2O = L-homocysteine + adenosine. The protein operates within amino-acid biosynthesis; L-homocysteine biosynthesis; L-homocysteine from S-adenosyl-L-homocysteine: step 1/1. Functionally, may play a key role in the regulation of the intracellular concentration of adenosylhomocysteine. This is Adenosylhomocysteinase from Synechococcus sp. (strain CC9311).